The chain runs to 357 residues: Tetraacyldisaccharide 4'-kinase (357 aa).

49–56 (TIGGTGKT) is a binding site for ATP.

It belongs to the LpxK family.

It catalyses the reaction a lipid A disaccharide + ATP = a lipid IVA + ADP + H(+). Its pathway is glycolipid biosynthesis; lipid IV(A) biosynthesis; lipid IV(A) from (3R)-3-hydroxytetradecanoyl-[acyl-carrier-protein] and UDP-N-acetyl-alpha-D-glucosamine: step 6/6. Its function is as follows. Transfers the gamma-phosphate of ATP to the 4'-position of a tetraacyldisaccharide 1-phosphate intermediate (termed DS-1-P) to form tetraacyldisaccharide 1,4'-bis-phosphate (lipid IVA). In Porphyromonas gingivalis (strain ATCC 33277 / DSM 20709 / CIP 103683 / JCM 12257 / NCTC 11834 / 2561), this protein is Tetraacyldisaccharide 4'-kinase.